A 455-amino-acid chain; its full sequence is Chromosomal replication initiator protein DnaA (455 aa).

The tract at residues Met1 to Tyr73 is domain I, interacts with DnaA modulators. The interval Tyr73–Asn114 is domain II. The interval Gln115–Ile331 is domain III, AAA+ region. 4 residues coordinate ATP: Gly159, Gly161, Lys162, and Thr163. Residues Ser332–Asn455 are domain IV, binds dsDNA.

Belongs to the DnaA family. In terms of assembly, oligomerizes as a right-handed, spiral filament on DNA at oriC.

The protein localises to the cytoplasm. In terms of biological role, plays an essential role in the initiation and regulation of chromosomal replication. ATP-DnaA binds to the origin of replication (oriC) to initiate formation of the DNA replication initiation complex once per cell cycle. Binds the DnaA box (a 9 base pair repeat at the origin) and separates the double-stranded (ds)DNA. Forms a right-handed helical filament on oriC DNA; dsDNA binds to the exterior of the filament while single-stranded (ss)DNA is stabiized in the filament's interior. The ATP-DnaA-oriC complex binds and stabilizes one strand of the AT-rich DNA unwinding element (DUE), permitting loading of DNA polymerase. After initiation quickly degrades to an ADP-DnaA complex that is not apt for DNA replication. Binds acidic phospholipids. In Crocosphaera subtropica (strain ATCC 51142 / BH68) (Cyanothece sp. (strain ATCC 51142)), this protein is Chromosomal replication initiator protein DnaA.